An 837-amino-acid polypeptide reads, in one-letter code: Translation initiation factor IF-2 (837 aa).

The disordered stretch occupies residues 94-253 (KRSPDEIEAE…QHGFQNPTGP (160 aa)). Residues 95-148 (RSPDEIEAERQRELEEQRAAEEAERLKAEEAAARQRAEEEARKAEEAARAKAAE) are compositionally biased toward basic and acidic residues. Low complexity predominate over residues 149-171 (EAVSAQPAAAVEVAAAEPVAKPA). 2 stretches are compositionally biased toward basic and acidic residues: residues 172–188 (AAEE…PKRD) and 220–229 (STDEESDGYR). The span at 230 to 244 (RGGRGGKSKLKKRNQ) shows a compositional bias: basic residues. Positions 337–506 (TRAPVVTVMG…LLQAEVLELK (170 aa)) constitute a tr-type G domain. A G1 region spans residues 346-353 (GHVDHGKT). 346 to 353 (GHVDHGKT) contacts GTP. The interval 371-375 (GITQH) is G2. The segment at 392–395 (DTPG) is G3. GTP-binding positions include 392 to 396 (DTPGH) and 446 to 449 (NKID). The interval 446–449 (NKID) is G4. Residues 482 to 484 (SAK) form a G5 region.

It belongs to the TRAFAC class translation factor GTPase superfamily. Classic translation factor GTPase family. IF-2 subfamily.

The protein resides in the cytoplasm. In terms of biological role, one of the essential components for the initiation of protein synthesis. Protects formylmethionyl-tRNA from spontaneous hydrolysis and promotes its binding to the 30S ribosomal subunits. Also involved in the hydrolysis of GTP during the formation of the 70S ribosomal complex. The polypeptide is Translation initiation factor IF-2 (Pseudomonas paraeruginosa (strain DSM 24068 / PA7) (Pseudomonas aeruginosa (strain PA7))).